The primary structure comprises 134 residues: Complexin-1 (134 aa).

Disordered regions lie at residues 1-60 (MEFV…AERE) and 74-114 (KKEE…EEDE). The span at 15–60 (DMGKMLGGDEEKDPDAAKKEEERQEALRQAEEERKAKYAKMEAERE) shows a compositional bias: basic and acidic residues. Positions 29-64 (DAAKKEEERQEALRQAEEERKAKYAKMEAEREVMRQ) form a coiled coil. Residues 48-70 (RKAKYAKMEAEREVMRQGIRDKY) are interaction with the SNARE complex.

It belongs to the complexin/synaphin family. As to quaternary structure, binds to the SNARE core complex containing SNAP25, VAMP2 and STX1A. As to expression, nervous system, and pancreatic islet cells. Present in many brain regions, including hippocampus and cerebellum. In the retina, present at conventional amacrine cell synapses (at protein level).

It is found in the cytoplasm. The protein resides in the cytosol. It localises to the perikaryon. The protein localises to the presynapse. Functionally, positively regulates a late step in exocytosis of various cytoplasmic vesicles, such as synaptic vesicles and other secretory vesicles. Organizes the SNAREs into a cross-linked zigzag topology that, when interposed between the vesicle and plasma membranes, is incompatible with fusion, thereby preventing SNAREs from releasing neurotransmitters until an action potential arrives at the synapse. Also involved in glucose-induced secretion of insulin by pancreatic beta-cells. Essential for motor behavior. This Mus musculus (Mouse) protein is Complexin-1 (Cplx1).